Here is a 310-residue protein sequence, read N- to C-terminus: Olfactory receptor 5P52 (310 aa).

Residues 1 to 25 (MEAENHTTVAELIILGLTEDPKLCI) are Extracellular-facing. The N-linked (GlcNAc...) asparagine glycan is linked to N5. Residues 26-46 (VFFVIFLGVYIITLVGNISII) form a helical membrane-spanning segment. Topologically, residues 47-54 (TLIRISSQ) are cytoplasmic. A helical membrane pass occupies residues 55–75 (LHTPMYLFLSHLAFVDIVFST). Residues 76–99 (SVSVIMLMELLGHGLVLSVATCAA) lie on the Extracellular side of the membrane. A disulfide bridge connects residues C97 and C189. A helical membrane pass occupies residues 100–120 (QLCMTVSFGSAECFLLAAMAY). Topologically, residues 121–133 (DRYVAICSPLLYS) are cytoplasmic. The chain crosses the membrane as a helical span at residues 134-154 (TLMSSRVCFLLLGISYVGGFV). Topologically, residues 155-196 (NGWTFTGCVLSLSFCGPTQINHFFCDFSPLLKVSCSDVSIIG) are extracellular. A helical membrane pass occupies residues 197-217 (IIPSISSGSIIVVTVFVIAVS). The Cytoplasmic portion of the chain corresponds to 218-237 (YIYILITILKMRSTEGRHKA). A helical transmembrane segment spans residues 238–258 (FSTCTSHLTAVTLFYGTITVI). Over 259 to 271 (YVMPKSSYSTEQN) the chain is Extracellular. The helical transmembrane segment at 272–292 (KVISLFYTVVIPMLNPLIYSL) threads the bilayer. The Cytoplasmic segment spans residues 293–310 (RNRDVKDALRKAIVRVYS).

The protein belongs to the G-protein coupled receptor 1 family.

The protein resides in the cell membrane. In terms of biological role, potential odorant receptor. This is Olfactory receptor 5P52 from Mus musculus (Mouse).